A 239-amino-acid chain; its full sequence is Large ribosomal subunit protein uL2 (239 aa).

Residues 200-239 (VNHPHGGKEHHIGRPSTVSRRAPPGRKVGHIAARRTGRRK) are disordered. Residues 222–239 (PPGRKVGHIAARRTGRRK) are compositionally biased toward basic residues.

This sequence belongs to the universal ribosomal protein uL2 family. In terms of assembly, part of the 50S ribosomal subunit. Forms a bridge to the 30S subunit in the 70S ribosome.

In terms of biological role, one of the primary rRNA binding proteins. Required for association of the 30S and 50S subunits to form the 70S ribosome, for tRNA binding and peptide bond formation. It has been suggested to have peptidyltransferase activity; this is somewhat controversial. Makes several contacts with the 16S rRNA in the 70S ribosome. This chain is Large ribosomal subunit protein uL2, found in Thermococcus onnurineus (strain NA1).